Reading from the N-terminus, the 95-residue chain is HssA/B-like protein 45 (95 aa).

Residues 1-31 (MTLFSSISSISNPMTSSKSSIASFGSGTSMS) form a disordered region.

Belongs to the hssA/B family.

The polypeptide is HssA/B-like protein 45 (hssl45) (Dictyostelium discoideum (Social amoeba)).